Reading from the N-terminus, the 491-residue chain is MISGVLVYSSRGELVLNKFFKNSLKRSISDIFRVQVINNLDVRSPVLTLGSTTFHHIRSRHGDNLWLVTITRSNANSAAIWEFLYKLDAVMNAYRLDREEALKEEFMIVHEMLDIMLGGNGIPIDTELNSVIAQMSVKPVRNMGGLLDSPDGNDVLSSSSSPTSSAGELHFPKFLTKRSSSFLGQGDSTSDFYDNNKITWRPKGIIHKKDEVFLYVNERINILVSRDGSILKSYVDGTIDITTHLSGTPICRFGLNDSLGMQSEDEKKWLAQQQRHSGSDFGNKNFIPKAAAGSVLLEDCKFHECVSLDKFNRNHIIEFVPPDGSMELMKYHVRDNINLPFKVTPIVTHSTRDNEIDYRITLKSLFPGKLSAKDVVLHIPVPPSTVDCKISVSNGHCKFVPEENAMIWRFNKYNGLTENTLSAVTVSTSDTTQLNLQQWTRPPISLEFEVMMFSNSGLVVRYFTISGKDSKHRAVKWIKYISKAGSYEVRY.

A phosphoserine mark is found at Ser179, Ser180, and Ser181. The MHD domain occupies 209 to 490 (KDEVFLYVNE…ISKAGSYEVR (282 aa)).

It belongs to the adaptor complexes medium subunit family. As to quaternary structure, adaptor protein complex 2 (AP-2) is a heterotetramer composed of two large adaptins (alpha-type subunit APL3 and beta-type subunit APL1), a medium chain (mu-type subunit APM4) and a small adaptin (sigma-type subunit APS2).

It is found in the membrane. The protein resides in the clathrin-coated pit. The protein localises to the cytoplasmic vesicle. Its subcellular location is the clathrin-coated vesicle membrane. Component of the adaptor complexes which link clathrin to receptors in coated vesicles. Clathrin-associated protein complexes are believed to interact with the cytoplasmic tails of membrane proteins, leading to their selection and concentration. This Saccharomyces cerevisiae (strain ATCC 204508 / S288c) (Baker's yeast) protein is AP-2 complex subunit mu (APM4).